We begin with the raw amino-acid sequence, 482 residues long: Cobyric acid synthase (482 aa).

One can recognise a GATase cobBQ-type domain in the interval 249 to 436 (QCKIACLALS…LHGLFTSDDF (188 aa)). Cys-331 (nucleophile) is an active-site residue. His-428 is a catalytic residue.

The protein belongs to the CobB/CobQ family. CobQ subfamily.

The protein operates within cofactor biosynthesis; adenosylcobalamin biosynthesis. In terms of biological role, catalyzes amidations at positions B, D, E, and G on adenosylcobyrinic A,C-diamide. NH(2) groups are provided by glutamine, and one molecule of ATP is hydrogenolyzed for each amidation. This Bradyrhizobium diazoefficiens (strain JCM 10833 / BCRC 13528 / IAM 13628 / NBRC 14792 / USDA 110) protein is Cobyric acid synthase.